A 39-amino-acid polypeptide reads, in one-letter code: U1-ectatotoxin-Et1b subunit A (39 aa).

A disulfide bridge connects residues Cys-14 and Cys-35.

The protein belongs to the ectatomin family. Ectatomin-Et subfamily. In terms of assembly, heterodimer of subunits A and B; disulfide-linked. In terms of tissue distribution, expressed by the venom gland.

It localises to the secreted. The protein localises to the target cell membrane. In Ectatomma tuberculatum (Selva ant), this protein is U1-ectatotoxin-Et1b subunit A.